Consider the following 124-residue polypeptide: NADH-quinone oxidoreductase subunit A (124 aa).

Transmembrane regions (helical) follow at residues 11 to 31 (YLPI…IMIL), 68 to 88 (LVAI…PWAI), and 93 to 113 (IGKI…IGFV).

This sequence belongs to the complex I subunit 3 family. In terms of assembly, NDH-1 is composed of 14 different subunits. Subunits NuoA, H, J, K, L, M, N constitute the membrane sector of the complex.

The protein localises to the cell inner membrane. The enzyme catalyses a quinone + NADH + 5 H(+)(in) = a quinol + NAD(+) + 4 H(+)(out). Its function is as follows. NDH-1 shuttles electrons from NADH, via FMN and iron-sulfur (Fe-S) centers, to quinones in the respiratory chain. The immediate electron acceptor for the enzyme in this species is believed to be ubiquinone. Couples the redox reaction to proton translocation (for every two electrons transferred, four hydrogen ions are translocated across the cytoplasmic membrane), and thus conserves the redox energy in a proton gradient. The chain is NADH-quinone oxidoreductase subunit A from Rickettsia bellii (strain RML369-C).